The primary structure comprises 108 residues: LBH domain-containing protein 2 (108 aa).

A compositionally biased stretch (pro residues) spans 1 to 11 (MSTPRPAPPQP). Residues 1–108 (MSTPRPAPPQ…SEDPAAPARG (108 aa)) form a disordered region. Positions 37–62 (QRLPSIVVEPSEADPVESGELRWPLE) constitute an LBH domain. Residues 63–85 (SAQRGPSQSRAAAAPSPSLPGEP) show a composition bias toward low complexity.

This Homo sapiens (Human) protein is LBH domain-containing protein 2.